Consider the following 415-residue polypeptide: Serine hydroxymethyltransferase (415 aa).

(6S)-5,6,7,8-tetrahydrofolate contacts are provided by residues leucine 119 and 123 to 125 (GHL). Lysine 228 is subject to N6-(pyridoxal phosphate)lysine. 353–355 (SAF) contacts (6S)-5,6,7,8-tetrahydrofolate.

This sequence belongs to the SHMT family. As to quaternary structure, homodimer. Pyridoxal 5'-phosphate is required as a cofactor.

It is found in the cytoplasm. The catalysed reaction is (6R)-5,10-methylene-5,6,7,8-tetrahydrofolate + glycine + H2O = (6S)-5,6,7,8-tetrahydrofolate + L-serine. Its pathway is one-carbon metabolism; tetrahydrofolate interconversion. It participates in amino-acid biosynthesis; glycine biosynthesis; glycine from L-serine: step 1/1. Its function is as follows. Catalyzes the reversible interconversion of serine and glycine with tetrahydrofolate (THF) serving as the one-carbon carrier. Also exhibits THF-independent aldolase activity toward beta-hydroxyamino acids, producing glycine and aldehydes, via a retro-aldol mechanism. The polypeptide is Serine hydroxymethyltransferase (Halobacterium salinarum (strain ATCC 29341 / DSM 671 / R1)).